A 491-amino-acid chain; its full sequence is Cytosolic Fe-S cluster assembly factor NAR1 (491 aa).

[4Fe-4S] cluster contacts are provided by Cys-20, Cys-59, Cys-62, Cys-65, Cys-177, Cys-231, Cys-412, and Cys-416.

Belongs to the NARF family. Interacts with CIA1.

The protein localises to the cytoplasm. It is found in the nucleus. Its function is as follows. Essential component of a cytosolic Fe/S protein assembly machinery. Required for maturation of extramitochondrial Fe/S proteins. May play a role in the transfer of pre-assembled Fe/S clusters to target apoproteins. This Saccharomyces cerevisiae (strain ATCC 204508 / S288c) (Baker's yeast) protein is Cytosolic Fe-S cluster assembly factor NAR1 (NAR1).